Consider the following 429-residue polypeptide: MKLYNLKNHNEQVNFEAAVKLGLGQQQGLFFPVELPTITPIELSKILKMDFITRSTEILSKFICHEISKEELYKHVKQAFSFKHPLKIKITKDIHCFELFHGPTLAFKDFGARFMAQMILLLNKKNESVTILTATSGDTGAAVANAFYGMKNVRVIILYPKGKISELQEKLFCTLGRNIKTISINGSFDDCQKLVKEAFNDKKLKESIGLNSANSINISRLLAQICYYFEAFSLISEEQRKNLVIAVPCGNFGNLTAGLLSKSLGLPIKSFIACTNANDTVPRFLNNGTWNPKKTVSTISNAMDISQPNNWTRIEELFYRKKWDLKKLRFGSVSDHTTEETLKELFKLGYVSEPHAAIAYRLLRDQLKENEFGLFLGTAHPAKFKNTVEKILKNKISLPSELQNRIDLPLLSHNINPVFSKLKTFLLEK.

Residue Lys108 is modified to N6-(pyridoxal phosphate)lysine.

The protein belongs to the threonine synthase family. Pyridoxal 5'-phosphate is required as a cofactor.

It carries out the reaction O-phospho-L-homoserine + H2O = L-threonine + phosphate. It functions in the pathway amino-acid biosynthesis; L-threonine biosynthesis; L-threonine from L-aspartate: step 5/5. In terms of biological role, catalyzes the gamma-elimination of phosphate from L-phosphohomoserine and the beta-addition of water to produce L-threonine. This chain is Threonine synthase (thrC), found in Buchnera aphidicola subsp. Acyrthosiphon pisum (strain APS) (Acyrthosiphon pisum symbiotic bacterium).